A 158-amino-acid polypeptide reads, in one-letter code: Endoribonuclease YbeY (158 aa).

Zn(2+) is bound by residues His121, His125, and His131.

It belongs to the endoribonuclease YbeY family. Zn(2+) serves as cofactor.

Its subcellular location is the cytoplasm. Functionally, single strand-specific metallo-endoribonuclease involved in late-stage 70S ribosome quality control and in maturation of the 3' terminus of the 16S rRNA. This is Endoribonuclease YbeY from Exiguobacterium sp. (strain ATCC BAA-1283 / AT1b).